The sequence spans 778 residues: ATP synthase subunit beta (778 aa).

Residues M1 to L289 are unknown. Residues M290 to N778 are ATP synthase subunit beta. An ATP-binding site is contributed by G447–T454.

This sequence belongs to the ATPase alpha/beta chains family. In terms of assembly, F-type ATPases have 2 components, CF(1) - the catalytic core - and CF(0) - the membrane proton channel. CF(1) has five subunits: alpha(3), beta(3), gamma(1), delta(1), epsilon(1). CF(0) has three main subunits: a(1), b(2) and c(9-12). The alpha and beta chains form an alternating ring which encloses part of the gamma chain. CF(1) is attached to CF(0) by a central stalk formed by the gamma and epsilon chains, while a peripheral stalk is formed by the delta and b chains.

It is found in the cell membrane. The enzyme catalyses ATP + H2O + 4 H(+)(in) = ADP + phosphate + 5 H(+)(out). In terms of biological role, produces ATP from ADP in the presence of a proton gradient across the membrane. The catalytic sites are hosted primarily by the beta subunits. This chain is ATP synthase subunit beta (atpD), found in Malacoplasma penetrans (strain HF-2) (Mycoplasma penetrans).